Here is a 162-residue protein sequence, read N- to C-terminus: Cytochrome c-type biogenesis protein CcmE (162 aa).

Topologically, residues 1-8 (MNPRRKKR) are cytoplasmic. Residues 9 to 29 (LTLAVALIGGVAAIASLLLYA) traverse the membrane as a helical; Signal-anchor for type II membrane protein segment. The Periplasmic portion of the chain corresponds to 30 to 162 (LNSNLNLFYT…YSQQKAPDTK (133 aa)). Residues His131 and Tyr135 each coordinate heme. The tract at residues 139–162 (EVAEAMGQKHEKLDYSQQKAPDTK) is disordered. A compositionally biased stretch (polar residues) spans 153–162 (YSQQKAPDTK).

Belongs to the CcmE/CycJ family.

It is found in the cell inner membrane. Its function is as follows. Heme chaperone required for the biogenesis of c-type cytochromes. Transiently binds heme delivered by CcmC and transfers the heme to apo-cytochromes in a process facilitated by CcmF and CcmH. The protein is Cytochrome c-type biogenesis protein CcmE of Shewanella putrefaciens (strain CN-32 / ATCC BAA-453).